The following is a 172-amino-acid chain: Protein-export protein SecB (172 aa).

Residues 1–22 (MADETSADINNPALQPNGEDTS) form a disordered region. A compositionally biased stretch (polar residues) spans 7-20 (ADINNPALQPNGED).

It belongs to the SecB family. In terms of assembly, homotetramer, a dimer of dimers. One homotetramer interacts with 1 SecA dimer.

The protein localises to the cytoplasm. One of the proteins required for the normal export of preproteins out of the cell cytoplasm. It is a molecular chaperone that binds to a subset of precursor proteins, maintaining them in a translocation-competent state. It also specifically binds to its receptor SecA. The polypeptide is Protein-export protein SecB (Sphingopyxis alaskensis (strain DSM 13593 / LMG 18877 / RB2256) (Sphingomonas alaskensis)).